Reading from the N-terminus, the 632-residue chain is tRNA-guanine(15) transglycosylase (632 aa).

Catalysis depends on Asp-86, which acts as the Nucleophile. Substrate contacts are provided by Asp-121 and Gly-186. Residues 553-628 (AMRVTVSKES…IAVKVHEGRD (76 aa)) enclose the PUA domain.

This sequence belongs to the archaeosine tRNA-ribosyltransferase family. Requires Zn(2+) as cofactor.

The enzyme catalyses guanosine(15) in tRNA + 7-cyano-7-deazaguanine = 7-cyano-7-carbaguanosine(15) in tRNA + guanine. It functions in the pathway tRNA modification; archaeosine-tRNA biosynthesis. In terms of biological role, exchanges the guanine residue with 7-cyano-7-deazaguanine (preQ0) at position 15 in the dihydrouridine loop (D-loop) of archaeal tRNAs. The polypeptide is tRNA-guanine(15) transglycosylase (Thermoplasma acidophilum (strain ATCC 25905 / DSM 1728 / JCM 9062 / NBRC 15155 / AMRC-C165)).